Reading from the N-terminus, the 355-residue chain is Protein RecA (355 aa).

Residue glycine 67–threonine 74 participates in ATP binding.

Belongs to the RecA family.

The protein resides in the cytoplasm. Can catalyze the hydrolysis of ATP in the presence of single-stranded DNA, the ATP-dependent uptake of single-stranded DNA by duplex DNA, and the ATP-dependent hybridization of homologous single-stranded DNAs. It interacts with LexA causing its activation and leading to its autocatalytic cleavage. This is Protein RecA from Proteus mirabilis (strain HI4320).